The sequence spans 286 residues: tRNA uridine(34) hydroxylase (286 aa).

The region spanning 130 to 225 is the Rhodanese domain; it reads RGDDVVFFDG…YGETFGDRGL (96 aa). The Cysteine persulfide intermediate role is filled by C185.

It belongs to the TrhO family.

The enzyme catalyses uridine(34) in tRNA + AH2 + O2 = 5-hydroxyuridine(34) in tRNA + A + H2O. Its function is as follows. Catalyzes oxygen-dependent 5-hydroxyuridine (ho5U) modification at position 34 in tRNAs. The sequence is that of tRNA uridine(34) hydroxylase from Rhodococcus erythropolis (strain PR4 / NBRC 100887).